A 62-amino-acid chain; its full sequence is Cytochrome b-c1 complex subunit 6-2, mitochondrial (62 aa).

Disulfide bonds link Cys-17-Cys-59 and Cys-31-Cys-45.

The protein belongs to the UQCRH/QCR6 family. As to quaternary structure, component of the ubiquinol-cytochrome c oxidoreductase (cytochrome b-c1 complex, complex III, CIII), a multisubunit enzyme composed of 10 subunits. The complex is composed of 3 respiratory subunits cytochrome b (MT-CYB), cytochrome c1 (CYC1-1 or CYC1-2) and Rieske protein (UCR1-1 or UCR1-2), 2 core protein subunits MPPalpha1 (or MPPalpha2) and MPPB, and 5 low-molecular weight protein subunits QCR7-1 (or QCR7-2), UCRQ-1 (or UCRQ-2), QCR9, UCRY and probably QCR6-1 (or QCR6-2). The complex exists as an obligatory dimer and forms supercomplexes (SCs) in the inner mitochondrial membrane with NADH-ubiquinone oxidoreductase (complex I, CI), resulting in different assemblies (supercomplexes SCI(1)III(2) and SCI(2)III(4)).

It localises to the mitochondrion inner membrane. Functionally, component of the ubiquinol-cytochrome c oxidoreductase, a multisubunit transmembrane complex that is part of the mitochondrial electron transport chain which drives oxidative phosphorylation. The respiratory chain contains 3 multisubunit complexes succinate dehydrogenase (complex II, CII), ubiquinol-cytochrome c oxidoreductase (cytochrome b-c1 complex, complex III, CIII) and cytochrome c oxidase (complex IV, CIV), that cooperate to transfer electrons derived from NADH and succinate to molecular oxygen, creating an electrochemical gradient over the inner membrane that drives transmembrane transport and the ATP synthase. The cytochrome b-c1 complex catalyzes electron transfer from ubiquinol to cytochrome c, linking this redox reaction to translocation of protons across the mitochondrial inner membrane, with protons being carried across the membrane as hydrogens on the quinol. In the process called Q cycle, 2 protons are consumed from the matrix, 4 protons are released into the intermembrane space and 2 electrons are passed to cytochrome c. The chain is Cytochrome b-c1 complex subunit 6-2, mitochondrial (QCR6-2) from Arabidopsis thaliana (Mouse-ear cress).